The following is a 284-amino-acid chain: Homeobox protein CDX-4 (284 aa).

Disordered regions lie at residues 15–40 (PGTL…SPMP) and 120–155 (GGGT…SRHS). Gly residues predominate over residues 22–37 (GGDGTAGTGGTGGGGS). The homeobox DNA-binding region spans 173–232 (KEKYRVVYTDHQRLELEKEFHCNRYITIQRKSELAVNLGLSERQVKIWFQNRRAKERKMI). The span at 238-253 (QFENSGGSVQSDSDSI) shows a compositional bias: polar residues. The tract at residues 238–259 (QFENSGGSVQSDSDSISPGELP) is disordered.

Belongs to the Caudal homeobox family.

It is found in the nucleus. The protein is Homeobox protein CDX-4 (CDX4) of Homo sapiens (Human).